An 802-amino-acid chain; its full sequence is Homeobox-leucine zipper protein ANTHOCYANINLESS 2 (802 aa).

The segment at 71–143 is disordered; that stretch reads QPERGTNRGE…RKKRYHRHTP (73 aa). Residues 103–113 show a composition bias toward basic and acidic residues; sequence RSREEEHESRS. Over residues 133–142 the composition is skewed to basic residues; the sequence is PRKKRYHRHT. The homeobox DNA-binding region spans 134–193; that stretch reads RKKRYHRHTPQQIQELESMFKECPHPDEKQRLELSKRLCLETRQVKFWFQNRRTQMKTQL. Residues 182–221 adopt a coiled-coil conformation; that stretch reads FQNRRTQMKTQLERHENALLRQENDKLRAENMSIREAMRN. An START domain is found at 315–546; the sequence is GIDQKSVLLE…LQRQCECLAI (232 aa).

The protein belongs to the HD-ZIP homeobox family. Class IV subfamily. In terms of assembly, interacts with AIL7/PLT7, ANT, BBM and AIL1. Expressed in roots, stems, leaves and floral buds.

Its subcellular location is the nucleus. In terms of biological role, probable transcription factor involved in the regulation of the tissue-specific accumulation of anthocyanins and in cellular organization of the primary root. This Arabidopsis thaliana (Mouse-ear cress) protein is Homeobox-leucine zipper protein ANTHOCYANINLESS 2.